Here is a 213-residue protein sequence, read N- to C-terminus: Probable GTP-binding protein EngB (213 aa).

One can recognise an EngB-type G domain in the interval 25-203 (EGTEVAFAGR…EDVLNGWLLP (179 aa)). Residues 33–40 (GRSNAGKS), 60–64 (GRTQL), 80–83 (DLPG), 147–150 (TKAD), and 179–184 (AQMFSA) contribute to the GTP site. Positions 40 and 62 each coordinate Mg(2+).

It belongs to the TRAFAC class TrmE-Era-EngA-EngB-Septin-like GTPase superfamily. EngB GTPase family. The cofactor is Mg(2+).

In terms of biological role, necessary for normal cell division and for the maintenance of normal septation. The polypeptide is Probable GTP-binding protein EngB (Saccharophagus degradans (strain 2-40 / ATCC 43961 / DSM 17024)).